A 208-amino-acid polypeptide reads, in one-letter code: NADH-quinone oxidoreductase subunit I 2 (208 aa).

4Fe-4S ferredoxin-type domains lie at 79–109 and 119–148; these read ILVE…IEGK and SVFN…QTDI. Cysteine 88, cysteine 91, cysteine 94, cysteine 98, cysteine 128, cysteine 131, cysteine 134, and cysteine 138 together coordinate [4Fe-4S] cluster.

It belongs to the complex I 23 kDa subunit family. In terms of assembly, NDH-1 is composed of 14 different subunits. Subunits NuoA, H, J, K, L, M, N constitute the membrane sector of the complex. [4Fe-4S] cluster is required as a cofactor.

The protein localises to the cell inner membrane. It catalyses the reaction a quinone + NADH + 5 H(+)(in) = a quinol + NAD(+) + 4 H(+)(out). Functionally, NDH-1 shuttles electrons from NADH, via FMN and iron-sulfur (Fe-S) centers, to quinones in the respiratory chain. The immediate electron acceptor for the enzyme in this species is believed to be ubiquinone. Couples the redox reaction to proton translocation (for every two electrons transferred, four hydrogen ions are translocated across the cytoplasmic membrane), and thus conserves the redox energy in a proton gradient. This chain is NADH-quinone oxidoreductase subunit I 2, found in Aquifex aeolicus (strain VF5).